The primary structure comprises 255 residues: tRNA1(Val) (adenine(37)-N6)-methyltransferase (255 aa).

Belongs to the methyltransferase superfamily. tRNA (adenine-N(6)-)-methyltransferase family.

The protein localises to the cytoplasm. It catalyses the reaction adenosine(37) in tRNA1(Val) + S-adenosyl-L-methionine = N(6)-methyladenosine(37) in tRNA1(Val) + S-adenosyl-L-homocysteine + H(+). Specifically methylates the adenine in position 37 of tRNA(1)(Val) (anticodon cmo5UAC). This chain is tRNA1(Val) (adenine(37)-N6)-methyltransferase, found in Porphyromonas gingivalis (strain ATCC 33277 / DSM 20709 / CIP 103683 / JCM 12257 / NCTC 11834 / 2561).